Consider the following 221-residue polypeptide: MDYSDPAELRESYDGAPLDPRGLAPQPMDQFHAWFTEACEAELSEPNAMVLSTVDPDGAPSARTVLLKGYDRRGLRFFTNYRSRKGVALAREPRACVVFPWHAIRRQVIVYGFAERLSDEENDAYFAQRPHGSQLGAWASEYQSAPVADRAELDRAYARCAEQWPPGTPVPRPEYWGGFLLVPQEVEFWQGRSDRMHDRFRYRLVSGTPSEGAWQIDRLSP.

The segment at methionine 1–arginine 21 is disordered. Substrate-binding positions include arginine 10–tyrosine 13 and lysine 68. Residues arginine 63 to lysine 68, phenylalanine 78 to threonine 79, arginine 84, lysine 85, and glutamine 107 each bind FMN. Positions 125, 129, and 133 each coordinate substrate. FMN is bound by residues glutamine 143 to serine 144 and tryptophan 189. A substrate-binding site is contributed by arginine 195–histidine 197. Arginine 199 is an FMN binding site.

This sequence belongs to the pyridoxamine 5'-phosphate oxidase family. Homodimer. It depends on FMN as a cofactor.

The enzyme catalyses pyridoxamine 5'-phosphate + O2 + H2O = pyridoxal 5'-phosphate + H2O2 + NH4(+). The catalysed reaction is pyridoxine 5'-phosphate + O2 = pyridoxal 5'-phosphate + H2O2. Its pathway is cofactor metabolism; pyridoxal 5'-phosphate salvage; pyridoxal 5'-phosphate from pyridoxamine 5'-phosphate: step 1/1. The protein operates within cofactor metabolism; pyridoxal 5'-phosphate salvage; pyridoxal 5'-phosphate from pyridoxine 5'-phosphate: step 1/1. Catalyzes the oxidation of either pyridoxine 5'-phosphate (PNP) or pyridoxamine 5'-phosphate (PMP) into pyridoxal 5'-phosphate (PLP). The sequence is that of Pyridoxine/pyridoxamine 5'-phosphate oxidase from Thermobifida fusca (strain YX).